A 181-amino-acid polypeptide reads, in one-letter code: Ribosome-recycling factor (181 aa).

Residues R131–N154 form a disordered region.

This sequence belongs to the RRF family.

It localises to the cytoplasm. Functionally, responsible for the release of ribosomes from messenger RNA at the termination of protein biosynthesis. May increase the efficiency of translation by recycling ribosomes from one round of translation to another. In Leuconostoc citreum (strain KM20), this protein is Ribosome-recycling factor.